A 724-amino-acid chain; its full sequence is DNA ligase (724 aa).

NAD(+)-binding positions include 44-48, 93-94, and E127; these read DADYD and SL. Catalysis depends on K129, which acts as the N6-AMP-lysine intermediate. Residues R150, E186, K307, and K331 each coordinate NAD(+). Zn(2+)-binding residues include C437, C440, C461, and C467. Residues 646–724 form the BRCT domain; it reads TEGSPVAGKT…EDEWLALIGG (79 aa).

This sequence belongs to the NAD-dependent DNA ligase family. LigA subfamily. Mg(2+) serves as cofactor. The cofactor is Mn(2+).

The enzyme catalyses NAD(+) + (deoxyribonucleotide)n-3'-hydroxyl + 5'-phospho-(deoxyribonucleotide)m = (deoxyribonucleotide)n+m + AMP + beta-nicotinamide D-nucleotide.. Its function is as follows. DNA ligase that catalyzes the formation of phosphodiester linkages between 5'-phosphoryl and 3'-hydroxyl groups in double-stranded DNA using NAD as a coenzyme and as the energy source for the reaction. It is essential for DNA replication and repair of damaged DNA. This Agrobacterium fabrum (strain C58 / ATCC 33970) (Agrobacterium tumefaciens (strain C58)) protein is DNA ligase.